A 1111-amino-acid chain; its full sequence is uncharacterized protein (1111 aa).

The signal sequence occupies residues 1-31 (MIRKLMKIPPFFTALFASAMFTLSVSQGVLA). 11 helical membrane-spanning segments follow: residues 490 to 510 (LPYL…IFKF), 538 to 558 (LALL…LAVC), 572 to 592 (FWHW…WISL), 620 to 640 (IIVV…TDAG), 644 to 664 (DVLG…IIAP), 694 to 714 (IPVG…LNLI), 797 to 817 (FIWT…VTVV), 840 to 860 (SITL…YVLV), 885 to 905 (ITTL…FATL), 922 to 942 (GLGF…ILLF), and 1003 to 1023 (LVIS…QLLL).

It belongs to the MscS (TC 1.A.23) family.

The protein resides in the cell membrane. This is an uncharacterized protein from Haemophilus influenzae (strain ATCC 51907 / DSM 11121 / KW20 / Rd).